Here is a 1051-residue protein sequence, read N- to C-terminus: Carbamoyl phosphate synthase large chain (1051 aa).

Residues 1–399 (MKETPKKVLV…SLQKAVRMLD (399 aa)) form a carboxyphosphate synthetic domain region. ATP-binding residues include Arg-127, Arg-167, Gly-173, Gly-174, Lys-206, Leu-208, Glu-213, Gly-239, Val-240, His-241, Gln-282, and Glu-296. The region spanning 131 to 325 (RETMIENNLP…LAYVSAKLAL (195 aa)) is the ATP-grasp 1 domain. The Mg(2+) site is built by Gln-282, Glu-296, and Asn-298. Positions 282, 296, and 298 each coordinate Mn(2+). Positions 400 to 548 (IGEPGVVGGK…LTYNGTEDDL (149 aa)) are oligomerization domain. The tract at residues 549–930 (EFSQGNKLLM…LKSWLSSIPN (382 aa)) is carbamoyl phosphate synthetic domain. Residues 673 to 863 (SKLLDKLGIS…LINESMKAIF (191 aa)) enclose the ATP-grasp 2 domain. ATP contacts are provided by Arg-709, Lys-748, Ile-750, Glu-755, Gly-779, Val-780, His-781, Ser-782, Gln-822, and Glu-834. 3 residues coordinate Mg(2+): Gln-822, Glu-834, and Asn-836. Residues Gln-822, Glu-834, and Asn-836 each contribute to the Mn(2+) site. Residues 930–1051 (NRIPNKNGIA…FEISEYGGGI (122 aa)) enclose the MGS-like domain. Residues 931–1051 (RIPNKNGIAL…FEISEYGGGI (121 aa)) are allosteric domain.

The protein belongs to the CarB family. As to quaternary structure, composed of two chains; the small (or glutamine) chain promotes the hydrolysis of glutamine to ammonia, which is used by the large (or ammonia) chain to synthesize carbamoyl phosphate. Tetramer of heterodimers (alpha,beta)4. Mg(2+) serves as cofactor. Requires Mn(2+) as cofactor.

It catalyses the reaction hydrogencarbonate + L-glutamine + 2 ATP + H2O = carbamoyl phosphate + L-glutamate + 2 ADP + phosphate + 2 H(+). The catalysed reaction is hydrogencarbonate + NH4(+) + 2 ATP = carbamoyl phosphate + 2 ADP + phosphate + 2 H(+). Its pathway is amino-acid biosynthesis; L-arginine biosynthesis; carbamoyl phosphate from bicarbonate: step 1/1. It functions in the pathway pyrimidine metabolism; UMP biosynthesis via de novo pathway; (S)-dihydroorotate from bicarbonate: step 1/3. Large subunit of the glutamine-dependent carbamoyl phosphate synthetase (CPSase). CPSase catalyzes the formation of carbamoyl phosphate from the ammonia moiety of glutamine, carbonate, and phosphate donated by ATP, constituting the first step of 2 biosynthetic pathways, one leading to arginine and/or urea and the other to pyrimidine nucleotides. The large subunit (synthetase) binds the substrates ammonia (free or transferred from glutamine from the small subunit), hydrogencarbonate and ATP and carries out an ATP-coupled ligase reaction, activating hydrogencarbonate by forming carboxy phosphate which reacts with ammonia to form carbamoyl phosphate. This Saccharolobus islandicus (strain M.16.4 / Kamchatka #3) (Sulfolobus islandicus) protein is Carbamoyl phosphate synthase large chain.